The chain runs to 229 residues: Uracil-DNA glycosylase (229 aa).

Asp64 functions as the Proton acceptor in the catalytic mechanism.

This sequence belongs to the uracil-DNA glycosylase (UDG) superfamily. UNG family.

Its subcellular location is the cytoplasm. The enzyme catalyses Hydrolyzes single-stranded DNA or mismatched double-stranded DNA and polynucleotides, releasing free uracil.. Its function is as follows. Excises uracil residues from the DNA which can arise as a result of misincorporation of dUMP residues by DNA polymerase or due to deamination of cytosine. The chain is Uracil-DNA glycosylase from Salmonella agona (strain SL483).